The sequence spans 466 residues: MAVLSVLLPITFLLSSVTGTPVTSPRQQSCNTVDEGYQCFSGVSHLWGQYSPYFSVDDESSLSEDVPDHCQVTFAQVLSRHGARYPTKSKSEKYAKLIKAVQHNATSFSGKYAFLKSYNYSLGADDLTPFGENQLVDSGIKFYQRYEELAKNVVPFIRASGSDRVIASGEKFIEGFQKAKLGDSKSKRGQPAPIVNVVITETEGFNNTLDHSLCTAFENSTTGDDAEDKFTAVFTPSIVERLEKDLPGTTLSSKEVVYLMDMCSFDTIALTRDGSRLSPFCALFTQEEWAQYDYLQSVSKYYGYGGGNPLGPAQGIGFANELIARLTKSPVKDHTTTNTTLDSNPATFPLNATLYADFSHDNTMTSVFFALGLYNTTEPLSQTSVQSTEETNGYSSARTVPFGARAYVEMMQCTDEKEPLVRVLVNDRVIPLQGCDADEYGRCKRDDFVEGLSFVTSGGNWGECFA.

A signal peptide spans methionine 1–glycine 19. Cysteine 30 and cysteine 39 are disulfide-bonded. 1D-myo-inositol hexakisphosphate contacts are provided by glutamine 49, tyrosine 50, arginine 80, histidine 81, arginine 84, and threonine 87. Disulfide bonds link cysteine 70-cysteine 413, cysteine 214-cysteine 464, cysteine 263-cysteine 281, and cysteine 435-cysteine 443. Histidine 81 serves as the catalytic Nucleophile. Residues asparagine 104 and asparagine 119 are each glycosylated (N-linked (GlcNAc...) asparagine). Arginine 164 provides a ligand contact to 1D-myo-inositol hexakisphosphate. N-linked (GlcNAc...) asparagine glycans are attached at residues asparagine 206 and asparagine 219. Lysine 300 lines the 1D-myo-inositol hexakisphosphate pocket. N-linked (GlcNAc...) asparagine glycans are attached at residues asparagine 338 and asparagine 351. Residues histidine 360 and aspartate 361 each contribute to the 1D-myo-inositol hexakisphosphate site. N-linked (GlcNAc...) asparagine glycosylation is present at asparagine 375.

Belongs to the histidine acid phosphatase family. Monomer.

The protein localises to the secreted. The enzyme catalyses 1D-myo-inositol hexakisphosphate + H2O = 1D-myo-inositol 1,2,4,5,6-pentakisphosphate + phosphate. It carries out the reaction 1D-myo-inositol 1,2,4,5,6-pentakisphosphate + H2O = 1D-myo-inositol 1,2,5,6-tetrakisphosphate + phosphate. It catalyses the reaction 1D-myo-inositol 1,2,5,6-tetrakisphosphate + H2O = 1D-myo-inositol 1,2,6-trisphosphate + phosphate. The catalysed reaction is 1D-myo-inositol 1,2,6-trisphosphate + H2O = 1D-myo-inositol 1,2-bisphosphate + phosphate. The enzyme catalyses 1D-myo-inositol 1,2-bisphosphate + H2O = 1D-myo-inositol 2-phosphate + phosphate. In terms of biological role, catalyzes the phosphate monoester hydrolysis of phytic acid (myo-inositol hexakisphosphate), which results in the stepwise formation of myo-inositol pentakis-, tetrakis-, tris-, bis-, and monophosphates, as well as the liberation of inorganic phosphate. Myo-inositol 2-monophosphate is the end product. This Aspergillus oryzae (strain ATCC 42149 / RIB 40) (Yellow koji mold) protein is Phytase A (phyA).